The following is a 247-amino-acid chain: tRNA pseudouridine synthase A (247 aa).

The active-site Nucleophile is the Asp52. Residue Tyr110 participates in substrate binding.

This sequence belongs to the tRNA pseudouridine synthase TruA family. As to quaternary structure, homodimer.

It catalyses the reaction uridine(38/39/40) in tRNA = pseudouridine(38/39/40) in tRNA. Its function is as follows. Formation of pseudouridine at positions 38, 39 and 40 in the anticodon stem and loop of transfer RNAs. The protein is tRNA pseudouridine synthase A of Hyphomonas neptunium (strain ATCC 15444).